The following is a 350-amino-acid chain: Phenylalanine--tRNA ligase alpha subunit (350 aa).

Glu259 contributes to the Mg(2+) binding site.

The protein belongs to the class-II aminoacyl-tRNA synthetase family. Phe-tRNA synthetase alpha subunit type 1 subfamily. As to quaternary structure, tetramer of two alpha and two beta subunits. It depends on Mg(2+) as a cofactor.

It localises to the cytoplasm. It carries out the reaction tRNA(Phe) + L-phenylalanine + ATP = L-phenylalanyl-tRNA(Phe) + AMP + diphosphate + H(+). This Rickettsia prowazekii (strain Madrid E) protein is Phenylalanine--tRNA ligase alpha subunit (pheS).